Reading from the N-terminus, the 223-residue chain is MQLKPMEINPEMLNKVLSRLGVAGQWRFVDVLGLEEDSLGSVPAPACALLLLFPLTAQHENFRKKQIEELKGQEVSPKVYFMKQTIGNSCGTIGLIHAVANNQDKLGFEDGSVLKQFLSETEKMSPEDRAKCFEKNEAIQAAHDAVAQEGQCRVDDKVNFHFILFNNVDGHLYELDGRMPFPVNHGASSEGTLLQDAAKVCREFTEREQGEVRFSAVALCKAA.

N-acetylmethionine is present on Met-1. The 220-residue stretch at 2 to 221 (QLKPMEINPE…VRFSAVALCK (220 aa)) folds into the UCH catalytic domain. The segment at 5 to 10 (PMEINP) is interaction with ubiquitin. Cys-90 functions as the Nucleophile in the catalytic mechanism. Position 125 is a phosphoserine (Ser-125). The active-site Proton donor is the His-161. Residues 211-216 (EVRFSA) are interaction with ubiquitin. A lipid anchor (S-farnesyl cysteine) is attached at Cys-220. The propeptide at 221–223 (KAA) is removed in mature form.

The protein belongs to the peptidase C12 family. Monomer. Homodimer. Interacts with COPS5 and SNCA. Post-translationally, O-glycosylated. Expressed in the placenta at all stages of pregnancy. Expression increases as pregnancy progresses.

It is found in the cytoplasm. It localises to the endoplasmic reticulum membrane. The protein localises to the nucleus. The enzyme catalyses Thiol-dependent hydrolysis of ester, thioester, amide, peptide and isopeptide bonds formed by the C-terminal Gly of ubiquitin (a 76-residue protein attached to proteins as an intracellular targeting signal).. Functionally, ubiquitin-protein hydrolase involved both in the processing of ubiquitin precursors and of ubiquitinated proteins. This enzyme is a thiol protease that recognizes and hydrolyzes a peptide bond at the C-terminal glycine of ubiquitin. Also binds to free monoubiquitin and may prevent its degradation in lysosomes. The homodimer may have ATP-independent ubiquitin ligase activity. This chain is Ubiquitin carboxyl-terminal hydrolase isozyme L1 (UCHL1), found in Macaca fascicularis (Crab-eating macaque).